A 98-amino-acid chain; its full sequence is Small ribosomal subunit protein eS24 (98 aa).

It belongs to the eukaryotic ribosomal protein eS24 family.

The chain is Small ribosomal subunit protein eS24 from Thermococcus gammatolerans (strain DSM 15229 / JCM 11827 / EJ3).